The primary structure comprises 79 residues: Acyl carrier protein (79 aa).

The Carrier domain maps to 2-77 (SDIEARVKKI…LAIDYAKSHA (76 aa)). S37 carries the post-translational modification O-(pantetheine 4'-phosphoryl)serine.

This sequence belongs to the acyl carrier protein (ACP) family. In terms of processing, 4'-phosphopantetheine is transferred from CoA to a specific serine of apo-ACP by AcpS. This modification is essential for activity because fatty acids are bound in thioester linkage to the sulfhydryl of the prosthetic group.

The protein resides in the cytoplasm. It participates in lipid metabolism; fatty acid biosynthesis. In terms of biological role, carrier of the growing fatty acid chain in fatty acid biosynthesis. This is Acyl carrier protein from Methylibium petroleiphilum (strain ATCC BAA-1232 / LMG 22953 / PM1).